A 213-amino-acid chain; its full sequence is Glycerol-3-phosphate acyltransferase (213 aa).

6 helical membrane-spanning segments follow: residues 3–23 (ILLL…LWIG), 55–75 (ITFL…IWLG), 80–100 (SPLI…FTGF), 110–130 (AGVL…VFAL), 142–162 (SITA…IHFL), and 163–183 (LDGY…VIIF).

It belongs to the PlsY family. In terms of assembly, probably interacts with PlsX.

It localises to the cell membrane. It carries out the reaction an acyl phosphate + sn-glycerol 3-phosphate = a 1-acyl-sn-glycero-3-phosphate + phosphate. Its pathway is lipid metabolism; phospholipid metabolism. Functionally, catalyzes the transfer of an acyl group from acyl-phosphate (acyl-PO(4)) to glycerol-3-phosphate (G3P) to form lysophosphatidic acid (LPA). This enzyme utilizes acyl-phosphate as fatty acyl donor, but not acyl-CoA or acyl-ACP. This is Glycerol-3-phosphate acyltransferase from Streptococcus thermophilus (strain CNRZ 1066).